The chain runs to 122 residues: Large ribosomal subunit protein uL14 (122 aa).

The protein belongs to the universal ribosomal protein uL14 family. Part of the 50S ribosomal subunit. Forms a cluster with proteins L3 and L19. In the 70S ribosome, L14 and L19 interact and together make contacts with the 16S rRNA in bridges B5 and B8.

Functionally, binds to 23S rRNA. Forms part of two intersubunit bridges in the 70S ribosome. This Corynebacterium diphtheriae (strain ATCC 700971 / NCTC 13129 / Biotype gravis) protein is Large ribosomal subunit protein uL14.